The sequence spans 113 residues: MNTVRVTFLLVFVLAVSLGQTDKDENRMEMQEKTEQGKSYLDFAENLLLQKLEELEAKLLEEDSEESRNSRQKRCIGEGVPCDENDPRCCSGLVCLKPTLHGIWYKSYYCYKK.

The N-terminal stretch at 1 to 21 is a signal peptide; the sequence is MNTVRVTFLLVFVLAVSLGQT. Residues 22 to 74 constitute a propeptide that is removed on maturation; it reads DKDENRMEMQEKTEQGKSYLDFAENLLLQKLEELEAKLLEEDSEESRNSRQKR. Cystine bridges form between Cys75–Cys90, Cys82–Cys95, and Cys89–Cys110.

It belongs to the neurotoxin 14 (magi-1) family. 01 (HNTX-16) subfamily. Expressed by the venom gland.

The protein localises to the secreted. Its function is as follows. Probable ion channel inhibitor. In Cyriopagopus hainanus (Chinese bird spider), this protein is U11-theraphotoxin-Hhn1a.